The following is a 473-amino-acid chain: tRNA-2-methylthio-N(6)-dimethylallyladenosine synthase (473 aa).

Residues 5 to 125 enclose the MTTase N-terminal domain; it reads RKLHIKSYGC…LPQLLARAKA (121 aa). Positions 14, 50, 88, 166, 170, and 173 each coordinate [4Fe-4S] cluster. Residues 152 to 384 enclose the Radical SAM core domain; that stretch reads RARGISAFVT…QNLIDSQQSA (233 aa). The 63-residue stretch at 387–449 folds into the TRAM domain; the sequence is RAAVGTTVDV…RYSLLGSLAS (63 aa). The span at 453 to 462 shows a compositional bias: low complexity; it reads SRASADDAPP. Residues 453–473 form a disordered region; the sequence is SRASADDAPPVGASSPAIMGV.

This sequence belongs to the methylthiotransferase family. MiaB subfamily. In terms of assembly, monomer. The cofactor is [4Fe-4S] cluster.

It is found in the cytoplasm. The catalysed reaction is N(6)-dimethylallyladenosine(37) in tRNA + (sulfur carrier)-SH + AH2 + 2 S-adenosyl-L-methionine = 2-methylsulfanyl-N(6)-dimethylallyladenosine(37) in tRNA + (sulfur carrier)-H + 5'-deoxyadenosine + L-methionine + A + S-adenosyl-L-homocysteine + 2 H(+). Functionally, catalyzes the methylthiolation of N6-(dimethylallyl)adenosine (i(6)A), leading to the formation of 2-methylthio-N6-(dimethylallyl)adenosine (ms(2)i(6)A) at position 37 in tRNAs that read codons beginning with uridine. This is tRNA-2-methylthio-N(6)-dimethylallyladenosine synthase from Nitrobacter hamburgensis (strain DSM 10229 / NCIMB 13809 / X14).